Consider the following 333-residue polypeptide: Anthranilate phosphoribosyltransferase (333 aa).

Residues Gly81, 84–85 (GD), Thr89, 91–94 (NIST), 109–117 (KHGNRSVSS), and Ala121 contribute to the 5-phospho-alpha-D-ribose 1-diphosphate site. Gly81 lines the anthranilate pocket. Ser93 is a Mg(2+) binding site. Residue Asn112 participates in anthranilate binding. Arg167 contributes to the anthranilate binding site. Positions 225 and 226 each coordinate Mg(2+).

The protein belongs to the anthranilate phosphoribosyltransferase family. In terms of assembly, homodimer. It depends on Mg(2+) as a cofactor.

It carries out the reaction N-(5-phospho-beta-D-ribosyl)anthranilate + diphosphate = 5-phospho-alpha-D-ribose 1-diphosphate + anthranilate. It participates in amino-acid biosynthesis; L-tryptophan biosynthesis; L-tryptophan from chorismate: step 2/5. Its function is as follows. Catalyzes the transfer of the phosphoribosyl group of 5-phosphorylribose-1-pyrophosphate (PRPP) to anthranilate to yield N-(5'-phosphoribosyl)-anthranilate (PRA). The chain is Anthranilate phosphoribosyltransferase from Actinobacillus succinogenes (strain ATCC 55618 / DSM 22257 / CCUG 43843 / 130Z).